A 26-amino-acid polypeptide reads, in one-letter code: Alpha-amylase inhibitor 1 (26 aa).

The protein belongs to the protease inhibitor I6 (cereal trypsin/alpha-amylase inhibitor) family.

The protein localises to the secreted. Functionally, alpha-amylase inhibitor. This is Alpha-amylase inhibitor 1 from Saussurea costus (Costus).